The primary structure comprises 545 residues: Metal transporter NRAT1 (545 aa).

Transmembrane regions (helical) follow at residues 51-71 (FLAHVGPGALVAIGFLDPSNL), 84-104 (ELLWVILVGMVFALLIQTLAA), 128-148 (IFLWIIAELAVISDDIPEVLG), 155-175 (ILLKIPVWAGVILTVFSTLLL), 188-208 (FIIAAFMFTMAACFFGELSYL), 234-254 (IALFGAIITPYNLFLHSALVL), 278-298 (LAFIVAFLINVSVVVVAGSIC), 333-353 (VVYAVALLASGQSTTISCTFA), 373-395 (LITRVIAIAPSLIVSIVSGPSGA), 398-418 (LIILSSMILSFELPFALIPLL), 437-457 (VVIAWILSFALIVVNTYFLVW), and 474-494 (GLISVVVFALMAAYLVAVVYL). Residues 516–545 (EAGGTPVVDASAADEDQPAPYRKDLADASM) form a disordered region. Over residues 536–545 (YRKDLADASM) the composition is skewed to basic and acidic residues.

This sequence belongs to the NRAMP (TC 2.A.55) family. As to expression, expressed at low levels in roots.

The protein resides in the cell membrane. In terms of biological role, metal transporter that transports the trivalent cation aluminum (Al(3+)), but does not seem to transport divalent cations such as iron (Fe(2+)), manganese (Mg(2+)) or Cadmium (Cd(2+)). Involved in Al tolerance by taking up Al in root cells, where it is detoxified by chelation with organic acid anions and sequestration into the vacuoles. The sequence is that of Metal transporter NRAT1 (NRAT1) from Oryza sativa subsp. japonica (Rice).